A 215-amino-acid chain; its full sequence is HTH-type transcriptional repressor FabR (215 aa).

An HTH tetR-type domain is found at 10 to 70 (KTRRSLVEAA…TMVDESGLML (61 aa)). The segment at residues 33–52 (SLREVAREAGIAPTSFYRHF) is a DNA-binding region (H-T-H motif).

Homodimer.

It is found in the cytoplasm. In terms of biological role, represses the transcription of fabB, involved in unsaturated fatty acid (UFA) biosynthesis. By controlling UFA production, FabR directly influences the physical properties of the membrane bilayer. This is HTH-type transcriptional repressor FabR from Shigella boydii serotype 18 (strain CDC 3083-94 / BS512).